Consider the following 217-residue polypeptide: Large ribosomal subunit protein uL3 (217 aa).

The disordered stretch occupies residues 131-155 (FSSSRASHGNSRSHNVPGSIGMAQD). Positions 132 to 145 (SSSRASHGNSRSHN) are enriched in low complexity. Q154 is modified (N5-methylglutamine).

It belongs to the universal ribosomal protein uL3 family. In terms of assembly, part of the 50S ribosomal subunit. Forms a cluster with proteins L14 and L19. Post-translationally, methylated by PrmB.

Functionally, one of the primary rRNA binding proteins, it binds directly near the 3'-end of the 23S rRNA, where it nucleates assembly of the 50S subunit. This is Large ribosomal subunit protein uL3 from Nitrosomonas eutropha (strain DSM 101675 / C91 / Nm57).